The following is a 218-amino-acid chain: Phosphoribosylformylglycinamidine synthase subunit PurQ (218 aa).

The Glutamine amidotransferase type-1 domain occupies 2 to 218; that stretch reads RVGVIRFPGS…FFRGILKFRG (217 aa). Cys85 acts as the Nucleophile in catalysis. Active-site residues include His192 and Glu194.

As to quaternary structure, part of the FGAM synthase complex composed of 1 PurL, 1 PurQ and 2 PurS subunits.

The protein resides in the cytoplasm. The catalysed reaction is N(2)-formyl-N(1)-(5-phospho-beta-D-ribosyl)glycinamide + L-glutamine + ATP + H2O = 2-formamido-N(1)-(5-O-phospho-beta-D-ribosyl)acetamidine + L-glutamate + ADP + phosphate + H(+). The enzyme catalyses L-glutamine + H2O = L-glutamate + NH4(+). The protein operates within purine metabolism; IMP biosynthesis via de novo pathway; 5-amino-1-(5-phospho-D-ribosyl)imidazole from N(2)-formyl-N(1)-(5-phospho-D-ribosyl)glycinamide: step 1/2. In terms of biological role, part of the phosphoribosylformylglycinamidine synthase complex involved in the purines biosynthetic pathway. Catalyzes the ATP-dependent conversion of formylglycinamide ribonucleotide (FGAR) and glutamine to yield formylglycinamidine ribonucleotide (FGAM) and glutamate. The FGAM synthase complex is composed of three subunits. PurQ produces an ammonia molecule by converting glutamine to glutamate. PurL transfers the ammonia molecule to FGAR to form FGAM in an ATP-dependent manner. PurS interacts with PurQ and PurL and is thought to assist in the transfer of the ammonia molecule from PurQ to PurL. This Methanothermobacter thermautotrophicus (strain ATCC 29096 / DSM 1053 / JCM 10044 / NBRC 100330 / Delta H) (Methanobacterium thermoautotrophicum) protein is Phosphoribosylformylglycinamidine synthase subunit PurQ.